Consider the following 142-residue polypeptide: 3-hydroxyacyl-[acyl-carrier-protein] dehydratase FabZ (142 aa).

The active site involves H47.

Belongs to the thioester dehydratase family. FabZ subfamily.

The protein resides in the cytoplasm. The enzyme catalyses a (3R)-hydroxyacyl-[ACP] = a (2E)-enoyl-[ACP] + H2O. Its function is as follows. Involved in unsaturated fatty acids biosynthesis. Catalyzes the dehydration of short chain beta-hydroxyacyl-ACPs and long chain saturated and unsaturated beta-hydroxyacyl-ACPs. This Thermoanaerobacter pseudethanolicus (strain ATCC 33223 / 39E) (Clostridium thermohydrosulfuricum) protein is 3-hydroxyacyl-[acyl-carrier-protein] dehydratase FabZ.